The following is a 241-amino-acid chain: Triosephosphate isomerase (241 aa).

Position 8–10 (8–10 (NWK)) interacts with substrate. The Electrophile role is filled by H93. Residue E163 is the Proton acceptor of the active site. Residues G169, S205, and 226–227 (GG) contribute to the substrate site.

This sequence belongs to the triosephosphate isomerase family. As to quaternary structure, homodimer.

Its subcellular location is the cytoplasm. It catalyses the reaction D-glyceraldehyde 3-phosphate = dihydroxyacetone phosphate. Its pathway is carbohydrate biosynthesis; gluconeogenesis. It participates in carbohydrate degradation; glycolysis; D-glyceraldehyde 3-phosphate from glycerone phosphate: step 1/1. Its function is as follows. Involved in the gluconeogenesis. Catalyzes stereospecifically the conversion of dihydroxyacetone phosphate (DHAP) to D-glyceraldehyde-3-phosphate (G3P). This Bdellovibrio bacteriovorus (strain ATCC 15356 / DSM 50701 / NCIMB 9529 / HD100) protein is Triosephosphate isomerase.